We begin with the raw amino-acid sequence, 223 residues long: Phosphoribosylformylglycinamidine synthase subunit PurQ (223 aa).

In terms of domain architecture, Glutamine amidotransferase type-1 spans 3–223; that stretch reads FAVLVFPGSN…MVKSWREQHV (221 aa). Residue C85 is the Nucleophile of the active site. Catalysis depends on residues H193 and E195.

In terms of assembly, part of the FGAM synthase complex composed of 1 PurL, 1 PurQ and 2 PurS subunits.

It is found in the cytoplasm. It carries out the reaction N(2)-formyl-N(1)-(5-phospho-beta-D-ribosyl)glycinamide + L-glutamine + ATP + H2O = 2-formamido-N(1)-(5-O-phospho-beta-D-ribosyl)acetamidine + L-glutamate + ADP + phosphate + H(+). The enzyme catalyses L-glutamine + H2O = L-glutamate + NH4(+). The protein operates within purine metabolism; IMP biosynthesis via de novo pathway; 5-amino-1-(5-phospho-D-ribosyl)imidazole from N(2)-formyl-N(1)-(5-phospho-D-ribosyl)glycinamide: step 1/2. Part of the phosphoribosylformylglycinamidine synthase complex involved in the purines biosynthetic pathway. Catalyzes the ATP-dependent conversion of formylglycinamide ribonucleotide (FGAR) and glutamine to yield formylglycinamidine ribonucleotide (FGAM) and glutamate. The FGAM synthase complex is composed of three subunits. PurQ produces an ammonia molecule by converting glutamine to glutamate. PurL transfers the ammonia molecule to FGAR to form FGAM in an ATP-dependent manner. PurS interacts with PurQ and PurL and is thought to assist in the transfer of the ammonia molecule from PurQ to PurL. This is Phosphoribosylformylglycinamidine synthase subunit PurQ from Staphylococcus aureus (strain MRSA252).